A 139-amino-acid polypeptide reads, in one-letter code: Transcription antitermination protein NusB (139 aa).

It belongs to the NusB family.

Involved in transcription antitermination. Required for transcription of ribosomal RNA (rRNA) genes. Binds specifically to the boxA antiterminator sequence of the ribosomal RNA (rrn) operons. The protein is Transcription antitermination protein NusB of Escherichia fergusonii (strain ATCC 35469 / DSM 13698 / CCUG 18766 / IAM 14443 / JCM 21226 / LMG 7866 / NBRC 102419 / NCTC 12128 / CDC 0568-73).